The primary structure comprises 282 residues: 4-hydroxy-3-methylbut-2-enyl diphosphate reductase (282 aa).

Cys12 contacts [4Fe-4S] cluster. The (2E)-4-hydroxy-3-methylbut-2-enyl diphosphate site is built by His40 and His72. Dimethylallyl diphosphate contacts are provided by His40 and His72. Isopentenyl diphosphate-binding residues include His40 and His72. A [4Fe-4S] cluster-binding site is contributed by Cys94. His122 is a binding site for (2E)-4-hydroxy-3-methylbut-2-enyl diphosphate. His122 contacts dimethylallyl diphosphate. Residue His122 participates in isopentenyl diphosphate binding. The Proton donor role is filled by Glu124. A (2E)-4-hydroxy-3-methylbut-2-enyl diphosphate-binding site is contributed by Thr160. Residue Cys188 participates in [4Fe-4S] cluster binding. (2E)-4-hydroxy-3-methylbut-2-enyl diphosphate is bound by residues Ser216, Asn218, and Ser260. 3 residues coordinate dimethylallyl diphosphate: Ser216, Asn218, and Ser260. Residues Ser216, Asn218, and Ser260 each contribute to the isopentenyl diphosphate site.

It belongs to the IspH family. It depends on [4Fe-4S] cluster as a cofactor.

It carries out the reaction isopentenyl diphosphate + 2 oxidized [2Fe-2S]-[ferredoxin] + H2O = (2E)-4-hydroxy-3-methylbut-2-enyl diphosphate + 2 reduced [2Fe-2S]-[ferredoxin] + 2 H(+). The enzyme catalyses dimethylallyl diphosphate + 2 oxidized [2Fe-2S]-[ferredoxin] + H2O = (2E)-4-hydroxy-3-methylbut-2-enyl diphosphate + 2 reduced [2Fe-2S]-[ferredoxin] + 2 H(+). It participates in isoprenoid biosynthesis; dimethylallyl diphosphate biosynthesis; dimethylallyl diphosphate from (2E)-4-hydroxy-3-methylbutenyl diphosphate: step 1/1. Its pathway is isoprenoid biosynthesis; isopentenyl diphosphate biosynthesis via DXP pathway; isopentenyl diphosphate from 1-deoxy-D-xylulose 5-phosphate: step 6/6. Its function is as follows. Catalyzes the conversion of 1-hydroxy-2-methyl-2-(E)-butenyl 4-diphosphate (HMBPP) into a mixture of isopentenyl diphosphate (IPP) and dimethylallyl diphosphate (DMAPP). Acts in the terminal step of the DOXP/MEP pathway for isoprenoid precursor biosynthesis. This is 4-hydroxy-3-methylbut-2-enyl diphosphate reductase from Geobacter metallireducens (strain ATCC 53774 / DSM 7210 / GS-15).